The following is a 173-amino-acid chain: ATP-dependent protease subunit HslV (173 aa).

Threonine 2 is a catalytic residue. Na(+)-binding residues include glycine 158, aspartate 161, and serine 164.

This sequence belongs to the peptidase T1B family. HslV subfamily. In terms of assembly, a double ring-shaped homohexamer of HslV is capped on each side by a ring-shaped HslU homohexamer. The assembly of the HslU/HslV complex is dependent on binding of ATP.

The protein localises to the cytoplasm. It catalyses the reaction ATP-dependent cleavage of peptide bonds with broad specificity.. Its activity is regulated as follows. Allosterically activated by HslU binding. In terms of biological role, protease subunit of a proteasome-like degradation complex believed to be a general protein degrading machinery. This Actinobacillus pleuropneumoniae serotype 5b (strain L20) protein is ATP-dependent protease subunit HslV.